Here is a 220-residue protein sequence, read N- to C-terminus: Ribose-5-phosphate isomerase A (220 aa).

Substrate-binding positions include 28–31 (TGST), 81–84 (DGAD), and 94–97 (KGGG). Glu103 serves as the catalytic Proton acceptor. Lys121 contacts substrate.

This sequence belongs to the ribose 5-phosphate isomerase family. Homodimer.

It catalyses the reaction aldehydo-D-ribose 5-phosphate = D-ribulose 5-phosphate. It participates in carbohydrate degradation; pentose phosphate pathway; D-ribose 5-phosphate from D-ribulose 5-phosphate (non-oxidative stage): step 1/1. In terms of biological role, catalyzes the reversible conversion of ribose-5-phosphate to ribulose 5-phosphate. The sequence is that of Ribose-5-phosphate isomerase A from Vesicomyosocius okutanii subsp. Calyptogena okutanii (strain HA).